The primary structure comprises 291 residues: UDP-N-acetylenolpyruvoylglucosamine reductase (291 aa).

One can recognise an FAD-binding PCMH-type domain in the interval glycine 19–glycine 186. Arginine 165 is a catalytic residue. Serine 215 functions as the Proton donor in the catalytic mechanism. Glutamate 285 is an active-site residue.

Belongs to the MurB family. FAD is required as a cofactor.

It localises to the cytoplasm. It catalyses the reaction UDP-N-acetyl-alpha-D-muramate + NADP(+) = UDP-N-acetyl-3-O-(1-carboxyvinyl)-alpha-D-glucosamine + NADPH + H(+). It participates in cell wall biogenesis; peptidoglycan biosynthesis. Its function is as follows. Cell wall formation. This is UDP-N-acetylenolpyruvoylglucosamine reductase from Prochlorococcus marinus (strain NATL2A).